Here is a 391-residue protein sequence, read N- to C-terminus: Probable sugar efflux transporter (391 aa).

12 consecutive transmembrane segments (helical) span residues 16–36 (VFVFSLSAFIFNTTEFVPVAL), 51–71 (VGLMITAYAWVVSLGSLPLML), 82–102 (LLFLFALFILSHILSALAWNF), 110–130 (MGIAFAHSIFWSITASLVIRV), 138–158 (QALGLLALGSSLAMILGLPLG), 170–190 (TFGVIGGVATLIALLMWKLLP), 210–230 (PLLMGIYLLVIMVISGHFTTY), 247–267 (ITTLMLFVFGLAGVVGSFLFG), 277–297 (FIAFAMVLVICPQLLLFVFKN), 300–320 (WVVFLQIFLWGIGITSLGISL), 338–358 (IYSGSYNVGIGSGALFGSIVI), and 361–381 (LGLGYIGFVGGALGLLALFWL).

Belongs to the major facilitator superfamily. SotB (TC 2.A.1.2) family.

It is found in the cell inner membrane. Functionally, involved in the efflux of sugars. The physiological role may be the reduction of the intracellular concentration of toxic sugars or sugar metabolites. This chain is Probable sugar efflux transporter, found in Helicobacter pylori (strain ATCC 700392 / 26695) (Campylobacter pylori).